The primary structure comprises 99 residues: Prostate and testis expressed protein 14 (99 aa).

An N-terminal signal peptide occupies residues 1-21 (MEKYLLLLLLGIFLRVGFLQA). The 78-residue stretch at 22-99 (LTCVSCGRLN…CDHQNLCNKP (78 aa)) folds into the UPAR/Ly6 domain. Cystine bridges form between cysteine 24-cysteine 51, cysteine 27-cysteine 36, cysteine 43-cysteine 69, cysteine 73-cysteine 89, and cysteine 90-cysteine 96. N-linked (GlcNAc...) asparagine glycosylation occurs at asparagine 31. Asparagine 75 carries an N-linked (GlcNAc...) asparagine glycan.

The protein belongs to the PATE family. As to quaternary structure, monomer. Post-translationally, glycosylated. As to expression, predominantly expressed in the seminal vesicles. Expressed in prostate, and to a lesser extent in the cauda epididymis.

The protein localises to the secreted. The protein is Prostate and testis expressed protein 14 of Mus musculus (Mouse).